Reading from the N-terminus, the 135-residue chain is Large ribosomal subunit protein uL16c (135 aa).

The residue at position 1 (Met1) is an N-methylmethionine.

As to quaternary structure, component of the chloroplast large ribosomal subunit (LSU). Mature 70S chloroplast ribosomes of higher plants consist of a small (30S) and a large (50S) subunit. The 30S small subunit contains 1 molecule of ribosomal RNA (16S rRNA) and 24 different proteins. The 50S large subunit contains 3 rRNA molecules (23S, 5S and 4.5S rRNA) and 33 different proteins. In terms of processing, partially alpha-N-monomethylated at Met-1 (10%), whereas 90% of it is blocked to Edman degradation, probably by trimethylation.

The protein resides in the plastid. It is found in the chloroplast. In terms of biological role, component of the chloroplast ribosome (chloro-ribosome), a dedicated translation machinery responsible for the synthesis of chloroplast genome-encoded proteins, including proteins of the transcription and translation machinery and components of the photosynthetic apparatus. The chain is Large ribosomal subunit protein uL16c from Spinacia oleracea (Spinach).